The primary structure comprises 276 residues: Undecaprenyl-diphosphatase (276 aa).

6 consecutive transmembrane segments (helical) span residues 43–63 (RAMAFNIIIQLGAILAVVWEF), 85–105 (INLLIAFLPAVVLGVIFADLI), 109–129 (LFNPITVATALVVGGLIMLWA), 184–204 (ATEFSFFLAMPTMVGAAVYSG), 218–238 (VFAIGFVTAFVFAMIAVKGLL), and 254–274 (IAFGLLILATWQFGWVDWTAA).

This sequence belongs to the UppP family.

It localises to the cell inner membrane. It carries out the reaction di-trans,octa-cis-undecaprenyl diphosphate + H2O = di-trans,octa-cis-undecaprenyl phosphate + phosphate + H(+). Functionally, catalyzes the dephosphorylation of undecaprenyl diphosphate (UPP). Confers resistance to bacitracin. This chain is Undecaprenyl-diphosphatase, found in Pseudomonas fluorescens (strain ATCC BAA-477 / NRRL B-23932 / Pf-5).